The primary structure comprises 256 residues: MLNIGPFSFHSRLLLGTGKFPDFDVQQKAIDVSEAEILTFAVRRMDIFDAKQPNLLERLDVKKYTLLPNTAGAKNAEEAVRIAKLAKASGLCDMIKVEVIGDDRTLLPDPVETLKASEMLLEEGFIVLPYTSDDVVLARKLQELGVHAIMPGASPIGSGLGIVNPLNLSFIIEQATLPVIVDAGIGSPADAAFAMELGADGVLLNTAVSGAKDPIKMAQAMKLSIEAGRLGFEAGRIARKRCATASSPLEGMSVVE.

K96 (schiff-base intermediate with DXP) is an active-site residue. 1-deoxy-D-xylulose 5-phosphate-binding positions include G157, 183-184 (AG), and 205-206 (NT).

Belongs to the ThiG family. As to quaternary structure, homotetramer. Forms heterodimers with either ThiH or ThiS.

Its subcellular location is the cytoplasm. The enzyme catalyses [ThiS sulfur-carrier protein]-C-terminal-Gly-aminoethanethioate + 2-iminoacetate + 1-deoxy-D-xylulose 5-phosphate = [ThiS sulfur-carrier protein]-C-terminal Gly-Gly + 2-[(2R,5Z)-2-carboxy-4-methylthiazol-5(2H)-ylidene]ethyl phosphate + 2 H2O + H(+). Its pathway is cofactor biosynthesis; thiamine diphosphate biosynthesis. Functionally, catalyzes the rearrangement of 1-deoxy-D-xylulose 5-phosphate (DXP) to produce the thiazole phosphate moiety of thiamine. Sulfur is provided by the thiocarboxylate moiety of the carrier protein ThiS. In vitro, sulfur can be provided by H(2)S. The polypeptide is Thiazole synthase (Bacillus cereus (strain AH187)).